The primary structure comprises 191 residues: Adenylate kinase (191 aa).

10 to 15 (AAGKGT) contributes to the ATP binding site. Residues 30–59 (STGDMLRAAIASGSELGQRVKGVLDRGELV) form an NMP region. AMP contacts are provided by residues threonine 31, arginine 36, 57–59 (ELV), 85–88 (GFPR), and glutamine 92. The LID stretch occupies residues 126–136 (KRFEEQGRPDD). Residue arginine 127 participates in ATP binding. Arginine 133 and arginine 144 together coordinate AMP. Residue glycine 172 coordinates ATP.

It belongs to the adenylate kinase family. As to quaternary structure, monomer.

It localises to the cytoplasm. The enzyme catalyses AMP + ATP = 2 ADP. Its pathway is purine metabolism; AMP biosynthesis via salvage pathway; AMP from ADP: step 1/1. Its function is as follows. Catalyzes the reversible transfer of the terminal phosphate group between ATP and AMP. Plays an important role in cellular energy homeostasis and in adenine nucleotide metabolism. The chain is Adenylate kinase from Caulobacter vibrioides (strain ATCC 19089 / CIP 103742 / CB 15) (Caulobacter crescentus).